The following is a 243-amino-acid chain: ATP synthase subunit a (243 aa).

Transmembrane regions (helical) follow at residues 28-48, 52-72, 83-103, 114-134, 141-161, 177-197, 200-220, and 221-241; these read SSLYMVLTVVFASLFLFAGVF, VIPGPMQSFVEIVCSFVLGII, YFPLILSVFLYVLFANLVGML, HIVVTLALAMVVFIFVTLIGL, FFAMFLPDGTPNWIAPLMIFL, LTANMIAGHTILKVIAGFVYP, LLISPLSFLFVVVLIVFEVFI, and AMLQAYIFVMLTCVYLNDSLF.

The protein belongs to the ATPase A chain family. As to quaternary structure, F-type ATPases have 2 components, CF(1) - the catalytic core - and CF(0) - the membrane proton channel. CF(1) has five subunits: alpha(3), beta(3), gamma(1), delta(1), epsilon(1). CF(0) has three main subunits: a(1), b(2) and c(9-12). The alpha and beta chains form an alternating ring which encloses part of the gamma chain. CF(1) is attached to CF(0) by a central stalk formed by the gamma and epsilon chains, while a peripheral stalk is formed by the delta and b chains.

It localises to the cell inner membrane. Key component of the proton channel; it plays a direct role in the translocation of protons across the membrane. The polypeptide is ATP synthase subunit a (Neorickettsia sennetsu (strain ATCC VR-367 / Miyayama) (Ehrlichia sennetsu)).